We begin with the raw amino-acid sequence, 370 residues long: Aminomethyltransferase (370 aa).

It belongs to the GcvT family. The glycine cleavage system is composed of four proteins: P, T, L and H.

The catalysed reaction is N(6)-[(R)-S(8)-aminomethyldihydrolipoyl]-L-lysyl-[protein] + (6S)-5,6,7,8-tetrahydrofolate = N(6)-[(R)-dihydrolipoyl]-L-lysyl-[protein] + (6R)-5,10-methylene-5,6,7,8-tetrahydrofolate + NH4(+). The glycine cleavage system catalyzes the degradation of glycine. This is Aminomethyltransferase from Clostridium botulinum (strain 657 / Type Ba4).